Here is a 32-residue protein sequence, read N- to C-terminus: Trypsin inhibitor 2b (32 aa).

3 cysteine pairs are disulfide-bonded: cysteine 3–cysteine 20, cysteine 10–cysteine 22, and cysteine 16–cysteine 29.

The protein belongs to the protease inhibitor I7 (squash-type serine protease inhibitor) family.

The protein localises to the secreted. Functionally, inhibits trypsin. This chain is Trypsin inhibitor 2b, found in Cucumis sativus (Cucumber).